Reading from the N-terminus, the 355-residue chain is S-adenosylmethionine:tRNA ribosyltransferase-isomerase (355 aa).

This sequence belongs to the QueA family. Monomer.

It localises to the cytoplasm. The enzyme catalyses 7-aminomethyl-7-carbaguanosine(34) in tRNA + S-adenosyl-L-methionine = epoxyqueuosine(34) in tRNA + adenine + L-methionine + 2 H(+). It participates in tRNA modification; tRNA-queuosine biosynthesis. Its function is as follows. Transfers and isomerizes the ribose moiety from AdoMet to the 7-aminomethyl group of 7-deazaguanine (preQ1-tRNA) to give epoxyqueuosine (oQ-tRNA). This Aeromonas salmonicida (strain A449) protein is S-adenosylmethionine:tRNA ribosyltransferase-isomerase.